We begin with the raw amino-acid sequence, 889 residues long: Valine--tRNA ligase (889 aa).

The 'HIGH' region motif lies at Pro50–His60. The 'KMSKS' region signature appears at Lys532–Ser536. Lys535 lines the ATP pocket. A coiled-coil region spans residues Leu816–Ala889.

It belongs to the class-I aminoacyl-tRNA synthetase family. ValS type 1 subfamily. In terms of assembly, monomer.

The protein resides in the cytoplasm. The catalysed reaction is tRNA(Val) + L-valine + ATP = L-valyl-tRNA(Val) + AMP + diphosphate. Functionally, catalyzes the attachment of valine to tRNA(Val). As ValRS can inadvertently accommodate and process structurally similar amino acids such as threonine, to avoid such errors, it has a 'posttransfer' editing activity that hydrolyzes mischarged Thr-tRNA(Val) in a tRNA-dependent manner. The polypeptide is Valine--tRNA ligase (Lactiplantibacillus plantarum (strain ATCC BAA-793 / NCIMB 8826 / WCFS1) (Lactobacillus plantarum)).